Reading from the N-terminus, the 304-residue chain is MNYASILEQIRGDLQPFLGTGKVADYIPELATVPADSFGMAIVTASGEIFRTGEADTRFSIQSISKLFACTLAFQLLGDALWERVGREPSGTAFNSLVQLESERGKPRNPFINAGALVVTDVLCRRFVQAETALVEFMRRLTGETSIDYDSRIAQSELQHAHRNRAMAHFMASFGNMEMPPEVVVDAYCRQCAISMSCVELAKAALFLTNHGVAPVTGERILDTSSAKRLSALMLTCGTYDAAGDFVYRVGLPAKSGVGGGIVAVLPGEMAACVWSPALDSNGNSAAGVLALEWLTTYTGQSIF.

Positions 63, 113, 157, 164, 188, 240, and 258 each coordinate substrate.

It belongs to the glutaminase family. Homotetramer.

It carries out the reaction L-glutamine + H2O = L-glutamate + NH4(+). This is Glutaminase from Paraburkholderia phytofirmans (strain DSM 17436 / LMG 22146 / PsJN) (Burkholderia phytofirmans).